The primary structure comprises 339 residues: 4-hydroxy-2-oxovalerate aldolase 3 (339 aa).

Positions 7–259 constitute a Pyruvate carboxyltransferase domain; sequence IRVTDTSLRD…KTGIDFFAIA (253 aa). 15–16 contacts substrate; sequence RD. Asp16 contributes to the Mn(2+) binding site. His19 functions as the Proton acceptor in the catalytic mechanism. Ser169 and His198 together coordinate substrate. Positions 198 and 200 each coordinate Mn(2+). Tyr289 is a binding site for substrate.

The protein belongs to the 4-hydroxy-2-oxovalerate aldolase family.

The enzyme catalyses (S)-4-hydroxy-2-oxopentanoate = acetaldehyde + pyruvate. This Rhodococcus opacus (strain B4) protein is 4-hydroxy-2-oxovalerate aldolase 3.